Here is a 137-residue protein sequence, read N- to C-terminus: uncharacterized protein (137 aa).

Residues 5 to 136 (NRHLIHQINQ…FSHLFRMFLQ (132 aa)) form the HTH marR-type domain. The H-T-H motif DNA-binding region spans 51-74 (QKEIWSYLNVEAPTVTRTIKRLEE).

This is an uncharacterized protein from Bacillus subtilis (strain 168).